A 348-amino-acid chain; its full sequence is S-adenosylmethionine:tRNA ribosyltransferase-isomerase (348 aa).

The protein belongs to the QueA family. As to quaternary structure, monomer.

It is found in the cytoplasm. The enzyme catalyses 7-aminomethyl-7-carbaguanosine(34) in tRNA + S-adenosyl-L-methionine = epoxyqueuosine(34) in tRNA + adenine + L-methionine + 2 H(+). It functions in the pathway tRNA modification; tRNA-queuosine biosynthesis. In terms of biological role, transfers and isomerizes the ribose moiety from AdoMet to the 7-aminomethyl group of 7-deazaguanine (preQ1-tRNA) to give epoxyqueuosine (oQ-tRNA). This chain is S-adenosylmethionine:tRNA ribosyltransferase-isomerase, found in Polynucleobacter asymbioticus (strain DSM 18221 / CIP 109841 / QLW-P1DMWA-1) (Polynucleobacter necessarius subsp. asymbioticus).